A 187-amino-acid polypeptide reads, in one-letter code: Bifunctional protein PyrR (187 aa).

Positions 109–121 (VILVDDVLYSGRS) match the PRPP-binding motif.

This sequence belongs to the purine/pyrimidine phosphoribosyltransferase family. PyrR subfamily.

It catalyses the reaction UMP + diphosphate = 5-phospho-alpha-D-ribose 1-diphosphate + uracil. Regulates the transcription of the pyrimidine nucleotide (pyr) operon in response to exogenous pyrimidines. Its function is as follows. Also displays a weak uracil phosphoribosyltransferase activity which is not physiologically significant. In Mycobacterium ulcerans (strain Agy99), this protein is Bifunctional protein PyrR.